The following is a 778-amino-acid chain: Serine/threonine-protein kinase BRSK1 (778 aa).

Positions 1 to 12 (MSSGSKEGGGGS) are enriched in gly residues. Positions 1-29 (MSSGSKEGGGGSPAYHLPHPHPHPPQHAQ) are disordered. The region spanning 34–285 (YRLEKTLGKG…LEQIQKHPWY (252 aa)) is the Protein kinase domain. Residues 40 to 48 (LGKGQTGLV) and Lys63 contribute to the ATP site. Residue Asp156 is the Proton acceptor of the active site. A Phosphothreonine; by LKB1 modification is found at Thr189. The UBA domain maps to 314–356 (ELDPDVLESMASLGCFRDRERLHRELRSEEENQEKMIYYLLLD). Residues 362–383 (PSCEDQDLPPRNDVDPPRKRVD) are compositionally biased toward basic and acidic residues. The interval 362 to 548 (PSCEDQDLPP…SPGGGVGGAA (187 aa)) is disordered. Phosphoserine is present on residues Ser399, Ser443, Ser447, and Ser450. The segment covering 430-457 (SRSVSGASTGLSSSPLSSPRSPVFSFSP) has biased composition (low complexity). Arg466, Arg481, Arg484, and Arg498 each carry omega-N-methylarginine. Residues 491–508 (QPPPPSARSTPLPGPPGS) are compositionally biased toward pro residues. Phosphoserine is present on Ser508. A compositionally biased stretch (low complexity) spans 509–533 (PRSSGGTPLHSPLHTPRASPTGTPG). Arg525 is subject to Omega-N-methylarginine. Phosphothreonine occurs at positions 529 and 535. Omega-N-methylarginine is present on Arg550. The tract at residues 560-588 (FLGSPRFHRRKMQVPTAEEMSSLTPESSP) is disordered. At Thr583 the chain carries Phosphothreonine. Phosphoserine is present on residues Ser586, Ser587, and Ser601. Positions 719 to 778 (QPSVQALADEKNGAQTRPAGTPPRSLQPPPGRSDPDLSSSPRRGPPKDKKLLATNGTPLP) are disordered.

It belongs to the protein kinase superfamily. CAMK Ser/Thr protein kinase family. SNF1 subfamily. The cofactor is Mg(2+). In terms of processing, phosphorylated at Thr-189 by STK11/LKB1 in complex with STE20-related adapter-alpha (STRADA) pseudo kinase and CAB39. Not phosphorylated at Thr-189 by CaMKK2. In contrast, it is phosphorylated and activated by CaMKK1. May be inactivated via dephosphorylation of Thr-189 by PP2C. Present in the gray matter of the brain and spinal cord (at protein level). Expressed in the nervous system, distributed within the brain and spinal cord of embryonic and postnatal animals.

The protein resides in the cytoplasm. The protein localises to the nucleus. Its subcellular location is the cytoskeleton. It localises to the microtubule organizing center. It is found in the centrosome. The protein resides in the synapse. The protein localises to the presynaptic active zone. Its subcellular location is the cytoplasmic vesicle. It localises to the secretory vesicle. It is found in the synaptic vesicle. The catalysed reaction is L-seryl-[protein] + ATP = O-phospho-L-seryl-[protein] + ADP + H(+). It catalyses the reaction L-threonyl-[protein] + ATP = O-phospho-L-threonyl-[protein] + ADP + H(+). It carries out the reaction L-seryl-[tau protein] + ATP = O-phospho-L-seryl-[tau protein] + ADP + H(+). The enzyme catalyses L-threonyl-[tau protein] + ATP = O-phospho-L-threonyl-[tau protein] + ADP + H(+). Its activity is regulated as follows. Activated by phosphorylation on Thr-189 by STK11/LKB1. Its function is as follows. Serine/threonine-protein kinase that plays a key role in polarization of neurons and centrosome duplication. Phosphorylates CDC25B, CDC25C, MAPT/TAU, RIMS1, TUBG1, TUBG2 and WEE1. Following phosphorylation and activation by STK11/LKB1, acts as a key regulator of polarization of cortical neurons, probably by mediating phosphorylation of microtubule-associated proteins such as MAPT/TAU at 'Thr-504' and 'Ser-554'. Also regulates neuron polarization by mediating phosphorylation of WEE1 at 'Ser-642' in postmitotic neurons, leading to down-regulate WEE1 activity in polarized neurons. In neurons, localizes to synaptic vesicles and plays a role in neurotransmitter release, possibly by phosphorylating RIMS1. Also acts as a positive regulator of centrosome duplication by mediating phosphorylation of gamma-tubulin (TUBG1 and TUBG2) at 'Ser-131', leading to translocation of gamma-tubulin and its associated proteins to the centrosome. Involved in the UV-induced DNA damage checkpoint response, probably by inhibiting CDK1 activity through phosphorylation and activation of WEE1, and inhibition of CDC25B and CDC25C. In Mus musculus (Mouse), this protein is Serine/threonine-protein kinase BRSK1 (Brsk1).